The sequence spans 201 residues: UPF0301 protein RER_60040 (201 aa).

This sequence belongs to the UPF0301 (AlgH) family.

This Rhodococcus erythropolis (strain PR4 / NBRC 100887) protein is UPF0301 protein RER_60040.